The following is a 135-amino-acid chain: MNTLLKKYRKQRYAWLRFLLFSKIEGSLPVALRILLSLQPFCCNIYRKYYQENKKVKSTSGNTALKIIEKLESLVSNLRLKYSQMFSLLFLHSYNCLQSLATETFRIIKKREKNLLSLLIPGSCIEIARHFVLKE.

This is an uncharacterized protein from Saccharomyces cerevisiae (strain ATCC 204508 / S288c) (Baker's yeast).